The chain runs to 333 residues: Flap endonuclease 1 (333 aa).

The N-domain stretch occupies residues 1–99; that stretch reads MGVALRDILA…ETNAERKKLR (99 aa). Residues Asp-28, Asp-81, Glu-153, Glu-155, Asp-174, Asp-176, and Asp-235 each coordinate Mg(2+). An I-domain region spans residues 117–256; the sequence is EAYRQARSAT…TALKIVKSGG (140 aa). The interaction with PCNA stretch occupies residues 325-333; it reads GQKTLESFF.

The protein belongs to the XPG/RAD2 endonuclease family. FEN1 subfamily. Interacts with PCNA. PCNA stimulates the nuclease activity without altering cleavage specificity. Mg(2+) serves as cofactor.

In terms of biological role, structure-specific nuclease with 5'-flap endonuclease and 5'-3' exonuclease activities involved in DNA replication and repair. During DNA replication, cleaves the 5'-overhanging flap structure that is generated by displacement synthesis when DNA polymerase encounters the 5'-end of a downstream Okazaki fragment. Binds the unpaired 3'-DNA end and kinks the DNA to facilitate 5' cleavage specificity. Cleaves one nucleotide into the double-stranded DNA from the junction in flap DNA, leaving a nick for ligation. Also involved in the base excision repair (BER) pathway. Acts as a genome stabilization factor that prevents flaps from equilibrating into structures that lead to duplications and deletions. Also possesses 5'-3' exonuclease activity on nicked or gapped double-stranded DNA. This is Flap endonuclease 1 from Methanoregula boonei (strain DSM 21154 / JCM 14090 / 6A8).